A 333-amino-acid chain; its full sequence is Serine/threonine-protein phosphatase PP1-beta (333 aa).

Residues aspartate 63, histidine 65, aspartate 91, and asparagine 123 each coordinate Mn(2+). Residue histidine 124 is the Proton donor of the active site. Residues histidine 172 and histidine 247 each coordinate Mn(2+). The disordered stretch occupies residues 306–333; sequence GAGGVGSNRPVTPPRNAPAAQPKKGAKK. Low complexity predominate over residues 322-333; that stretch reads APAAQPKKGAKK.

This sequence belongs to the PPP phosphatase family. PP-1 subfamily. In terms of assembly, interacts with lab-1; the interaction is direct. Interacts with knl-1; the interaction is direct. It depends on Mn(2+) as a cofactor.

Its subcellular location is the cytoplasm. It localises to the nucleus. It carries out the reaction O-phospho-L-seryl-[protein] + H2O = L-seryl-[protein] + phosphate. The catalysed reaction is O-phospho-L-threonyl-[protein] + H2O = L-threonyl-[protein] + phosphate. Functionally, serine/threonine-protein phosphatase essential for chromosomal dynamics during meiosis and mitosis. Antagonizes the function of air-2 in the regulation of chromosome cohesion. Dephosphorylates histone H3 at 'Ser-10'. Also involved in the activation of chloride channel clh-3 during cell swelling and meiotic maturation. Essential for embryogenesis. The protein is Serine/threonine-protein phosphatase PP1-beta (gsp-2) of Caenorhabditis briggsae.